The primary structure comprises 867 residues: Nuclear body protein SP140 (867 aa).

The HSR domain maps to 22 to 138 (VAEIQNVEGQ…IYRSFQNVCY (117 aa)). Disordered regions lie at residues 260–341 (TYST…EEPQ), 365–432 (TPQV…SEEL), and 486–580 (IANN…KHKD). Residues 268-301 (KQGEEEGRNSPRKRNQDKEKYQESPEGRDKETFD) are compositionally biased toward basic and acidic residues. Composition is skewed to acidic residues over residues 323 to 341 (EGEE…EEPQ) and 384 to 397 (EGEE…EMCD). Residues 404 to 416 (ASSSLARRGSVSS) are compositionally biased toward low complexity. Composition is skewed to basic residues over residues 494–512 (KPKR…RMRM) and 567–577 (QKRVRSRASRK). The Nuclear localization signal motif lies at 495–514 (PKRKRRKKRGHGWSRMRMRR). An SAND domain is found at 580–661 (DETVDFKAPL…RWLMENGFLP (82 aa)). The segment at 690–736 (LDECEVCRDGGELFCCDTCSRVFHEDCHIPPVEAERTPWNCIFCRMK) adopts a PHD-type zinc-finger fold. Thr726 is subject to Phosphothreonine. Residues 754–857 (QMCPEEQLKC…AEFEKNFKEV (104 aa)) form the Bromo domain.

In terms of assembly, interacts with PIN1. Phosphorylation at Thr-726 promotes binding of PIN1 and subsequent isomerization of Pro-727. High levels in spleen and peripheral blood leukocytes, much lower levels in tonsils, thymus, prostate, ovary, small intestine, and colon. Very low levels in heart, brain, placenta, lung, liver, skeletal muscle, kidney, and pancreas. Not detected in brain, liver and muscle.

The protein localises to the nucleus. It localises to the PML body. It is found in the cytoplasm. Component of the nuclear body, also known as nuclear domain 10, PML oncogenic domain, and KR body. May be involved in the pathogenesis of acute promyelocytic leukemia and viral infection. May play a role in chromatin-mediated regulation of gene expression although it does not bind to histone H3 tails. The protein is Nuclear body protein SP140 of Homo sapiens (Human).